The sequence spans 431 residues: Serine--tRNA ligase (431 aa).

An L-serine-binding site is contributed by 237-239 (TAE). Position 268–270 (268–270 (RSE)) interacts with ATP. Glutamate 291 contacts L-serine. Position 355–358 (355–358 (EISS)) interacts with ATP. Position 390 (serine 390) interacts with L-serine.

The protein belongs to the class-II aminoacyl-tRNA synthetase family. Type-1 seryl-tRNA synthetase subfamily. Homodimer. The tRNA molecule binds across the dimer.

The protein localises to the cytoplasm. It catalyses the reaction tRNA(Ser) + L-serine + ATP = L-seryl-tRNA(Ser) + AMP + diphosphate + H(+). It carries out the reaction tRNA(Sec) + L-serine + ATP = L-seryl-tRNA(Sec) + AMP + diphosphate + H(+). It functions in the pathway aminoacyl-tRNA biosynthesis; selenocysteinyl-tRNA(Sec) biosynthesis; L-seryl-tRNA(Sec) from L-serine and tRNA(Sec): step 1/1. Its function is as follows. Catalyzes the attachment of serine to tRNA(Ser). Is also able to aminoacylate tRNA(Sec) with serine, to form the misacylated tRNA L-seryl-tRNA(Sec), which will be further converted into selenocysteinyl-tRNA(Sec). The sequence is that of Serine--tRNA ligase from Neisseria meningitidis serogroup B (strain ATCC BAA-335 / MC58).